The sequence spans 253 residues: Electron transfer flavoprotein subunit beta, mitochondrial (253 aa).

Belongs to the ETF beta-subunit/FixA family. In terms of assembly, heterodimer of an alpha and a beta subunit. FAD serves as cofactor. AMP is required as a cofactor.

It is found in the mitochondrion matrix. The electron transfer flavoprotein serves as a specific electron acceptor for several dehydrogenases, including five acyl-CoA dehydrogenases, glutaryl-CoA and sarcosine dehydrogenase. It transfers the electrons to the main mitochondrial respiratory chain via ETF-ubiquinone oxidoreductase (ETF dehydrogenase). The protein is Electron transfer flavoprotein subunit beta, mitochondrial (ETFB) of Oryza sativa subsp. japonica (Rice).